We begin with the raw amino-acid sequence, 459 residues long: 1,3-beta-glucanosyltransferase gas2 (459 aa).

The first 19 residues, 1–19 (MVSFTKFTLQLLSASAAFA), serve as a signal peptide directing secretion. Residues Asn34 and Asn68 are each glycosylated (N-linked (GlcNAc...) asparagine). Cysteines 69 and 98 form a disulfide. Residue Tyr87 participates in (1,3-beta-D-glucosyl)n binding. N-linked (GlcNAc...) asparagine glycans are attached at residues Asn90, Asn104, and Asn146. (1,3-beta-D-glucosyl)n contacts are provided by Asn155 and Glu156. The active-site Proton donor is the Glu156. Asn160 is a glycosylation site (N-linked (GlcNAc...) asparagine). (1,3-beta-D-glucosyl)n is bound by residues Asp197 and Arg202. Disulfide bonds link Cys211–Cys350 and Cys235–Cys266. Residues Asn212, Asn218, and Asn254 are each glycosylated (N-linked (GlcNAc...) asparagine). Catalysis depends on Glu263, which acts as the Nucleophile. N-linked (GlcNAc...) asparagine glycosylation occurs at Asn284. Residue Tyr295 participates in (1,3-beta-D-glucosyl)n binding. 5 N-linked (GlcNAc...) asparagine glycosylation sites follow: Asn308, Asn334, Asn344, Asn354, and Asn370. 3 disulfides stabilise this stretch: Cys374–Cys427, Cys383–Cys449, and Cys402–Cys409. Residue Asn423 is glycosylated (N-linked (GlcNAc...) asparagine).

It belongs to the glycosyl hydrolase 72 family.

It localises to the endoplasmic reticulum lumen. The protein resides in the secreted. Functionally, splits internally a 1,3-beta-glucan molecule and transfers the newly generated reducing end (the donor) to the non-reducing end of another 1,3-beta-glucan molecule (the acceptor) forming a 1,3-beta linkage, resulting in the elongation of 1,3-beta-glucan chains in the cell wall. The sequence is that of 1,3-beta-glucanosyltransferase gas2 (gas2) from Schizosaccharomyces pombe (strain 972 / ATCC 24843) (Fission yeast).